Reading from the N-terminus, the 394-residue chain is Ceramide glucosyltransferase (394 aa).

The Lumenal segment spans residues 1 to 10 (MALLDLAQEG). The chain crosses the membrane as a helical span at residues 11–32 (MALFGFVLFVVLWLMHFMSIIY). The Cytoplasmic segment spans residues 33–195 (TRLHLNKKAT…QVYFGTSHPR (163 aa)). Residue D92 is a short sequence motif, D1. An N6-acetyllysine modification is found at K117. A short sequence motif (D2) is located at residue D144. A helical transmembrane segment spans residues 196–215 (SYISANVTGFKCVTGMSCLM). At 216–287 (RKDVLDQAGG…KLRINMLPAT (72 aa)) the chain is on the lumenal side. A short sequence motif (D3) is located at residue D236. D236 (proton acceptor) is an active-site residue. A (Q/R)XXRW motif is present at residues 272–276 (RMIRW). A helical membrane pass occupies residues 288–304 (IICEPISECFVASLIIG). The Cytoplasmic portion of the chain corresponds to 305–309 (WAAHH). A helical transmembrane segment spans residues 310–328 (VFRWDIMVFFMCHCLAWFI). The Lumenal portion of the chain corresponds to 329–348 (FDYIQLRGVQGGTLCFSKLD). Residues 349–369 (YAVAWFIRESMTIYIFLSALW) form a helical membrane-spanning segment. Over 370 to 394 (DPTISWRTGRYRLRCGGTAEEILDV) the chain is Cytoplasmic.

It belongs to the glycosyltransferase 2 family. Interacts with RTN1; regulates the ceramide glucosyltransferase activity of UGCG.

It localises to the golgi apparatus membrane. The enzyme catalyses an N-acylsphing-4-enine + UDP-alpha-D-glucose = a beta-D-glucosyl-(1&lt;-&gt;1')-N-acylsphing-4-enine + UDP + H(+). It carries out the reaction UDP-alpha-D-xylose + an N-acylsphing-4-enine = a beta-D-xylosyl-(1&lt;-&gt;1')-N-acylsphing-4-enine + UDP + H(+). It catalyses the reaction N-(9Z-octadecenoyl)-sphing-4-enine + UDP-alpha-D-xylose = beta-D-xylosyl-(1&lt;-&gt;1')-N-(9Z-octadecenoyl)-sphing-4-enine + UDP + H(+). The protein operates within lipid metabolism; sphingolipid metabolism. Its function is as follows. Participates in the initial step of the glucosylceramide-based glycosphingolipid/GSL synthetic pathway at the cytosolic surface of the Golgi. Catalyzes the transfer of glucose from UDP-glucose to ceramide to produce glucosylceramide/GlcCer (such as beta-D-glucosyl-(1&lt;-&gt;1')-N-acylsphing-4-enine). Glucosylceramide is the core component of glycosphingolipids/GSLs, amphipathic molecules consisting of a ceramide lipid moiety embedded in the outer leaflet of the membrane, linked to one of hundreds of different externally oriented oligosaccharide structures. Glycosphingolipids are essential components of membrane microdomains that mediate membrane trafficking and signal transduction. They are implicated in many fundamental cellular processes, including growth, differentiation, migration, morphogenesis, cell-to-cell and cell-to-matrix interactions. They are required for instance in the proper development and functioning of the nervous system. As an example of their role in signal transduction, they regulate the leptin receptor/LEPR in the leptin-mediated signaling pathway. They also play an important role in the establishment of the skin barrier regulating keratinocyte differentiation and the proper assembly of the cornified envelope. The biosynthesis of GSLs is also required for the proper intestinal endocytic uptake of nutritional lipids. Catalyzes the synthesis of xylosylceramide/XylCer (such as beta-D-xylosyl-(1&lt;-&gt;1')-N-acylsphing-4-enine) using UDP-Xyl as xylose donor. This is Ceramide glucosyltransferase from Mus musculus (Mouse).